Here is a 463-residue protein sequence, read N- to C-terminus: Bifunctional protein HldE (463 aa).

The ribokinase stretch occupies residues 1–313; it reads MTGPMAVRTD…RALAALPDTD (313 aa). The active site involves Asp258. The segment at 331 to 463 is cytidylyltransferase; sequence AAGGCFDLLH…LLARAAEGAR (133 aa).

This sequence in the N-terminal section; belongs to the carbohydrate kinase PfkB family. It in the C-terminal section; belongs to the cytidylyltransferase family. As to quaternary structure, homodimer.

The enzyme catalyses D-glycero-beta-D-manno-heptose 7-phosphate + ATP = D-glycero-beta-D-manno-heptose 1,7-bisphosphate + ADP + H(+). It carries out the reaction D-glycero-beta-D-manno-heptose 1-phosphate + ATP + H(+) = ADP-D-glycero-beta-D-manno-heptose + diphosphate. It participates in nucleotide-sugar biosynthesis; ADP-L-glycero-beta-D-manno-heptose biosynthesis; ADP-L-glycero-beta-D-manno-heptose from D-glycero-beta-D-manno-heptose 7-phosphate: step 1/4. It functions in the pathway nucleotide-sugar biosynthesis; ADP-L-glycero-beta-D-manno-heptose biosynthesis; ADP-L-glycero-beta-D-manno-heptose from D-glycero-beta-D-manno-heptose 7-phosphate: step 3/4. Its function is as follows. Catalyzes the phosphorylation of D-glycero-D-manno-heptose 7-phosphate at the C-1 position to selectively form D-glycero-beta-D-manno-heptose-1,7-bisphosphate. Functionally, catalyzes the ADP transfer from ATP to D-glycero-beta-D-manno-heptose 1-phosphate, yielding ADP-D-glycero-beta-D-manno-heptose. In Streptomyces coelicolor (strain ATCC BAA-471 / A3(2) / M145), this protein is Bifunctional protein HldE.